The primary structure comprises 120 residues: Membrane-anchored ubiquitin-fold protein 4 (120 aa).

Positions 7–73 (VELKFRLYDG…LENGKTVAQC (67 aa)) constitute a Ubiquitin-like domain. A lipid anchor (S-palmitoyl cysteine) is attached at C115. At C117 the chain carries Cysteine methyl ester. C117 carries S-farnesyl cysteine lipidation. Residues 118 to 120 (TIM) constitute a propeptide, removed in mature form.

Ubiquitous.

The protein localises to the cell membrane. In terms of biological role, may serve as docking site to facilitate the association of other proteins to the plasma membrane. In Arabidopsis thaliana (Mouse-ear cress), this protein is Membrane-anchored ubiquitin-fold protein 4 (MUB4).